The following is a 197-amino-acid chain: Glycerol-3-phosphate acyltransferase (197 aa).

6 helical membrane-spanning segments follow: residues 1–21, 50–70, 77–97, 111–131, 137–157, and 158–178; these read MNILIIFASYLLGSLPTGFLI, WPALFVFIIDLGKGLIAVKIA, GLIEVIAGISAISGHIWPIWL, MFLALSWKVGLASLGFFLIVL, VSLSSISAAILLPIFMFFYLG, and KFMHSYFFISLIVALLVIWKH.

Belongs to the PlsY family. In terms of assembly, probably interacts with PlsX.

It is found in the cell inner membrane. The catalysed reaction is an acyl phosphate + sn-glycerol 3-phosphate = a 1-acyl-sn-glycero-3-phosphate + phosphate. The protein operates within lipid metabolism; phospholipid metabolism. Catalyzes the transfer of an acyl group from acyl-phosphate (acyl-PO(4)) to glycerol-3-phosphate (G3P) to form lysophosphatidic acid (LPA). This enzyme utilizes acyl-phosphate as fatty acyl donor, but not acyl-CoA or acyl-ACP. The sequence is that of Glycerol-3-phosphate acyltransferase from Prochlorococcus marinus (strain MIT 9301).